Consider the following 659-residue polypeptide: uncharacterized protein (659 aa).

The signal sequence occupies residues 1–25 (MVKRRLSAFGNAFLIYFIIFRLCCC). At 26-556 (SPQTSHWCKY…LYQESSFQKR (531 aa)) the chain is on the lumenal side. N-linked (GlcNAc...) asparagine glycosylation is found at Asn-94, Asn-111, Asn-128, and Asn-142. The 163-residue stretch at 173–335 (AATIDSNIDE…SLLRVYGKTM (163 aa)) folds into the SUN domain. N-linked (GlcNAc...) asparagine glycosylation is found at Asn-393 and Asn-415. Residues 417–445 (TGKSESYPATSTRSFNDISPSSSSSYSTA) form a disordered region. The span at 423 to 434 (YPATSTRSFNDI) shows a compositional bias: polar residues. N-linked (GlcNAc...) asparagine glycans are attached at residues Asn-495 and Asn-504. A helical transmembrane segment spans residues 557 to 574 (LLMLQLTVLIVLTVYMAV). Residues 575 to 659 (SRLPENLPTT…IIHSRSHSVC (85 aa)) are Cytoplasmic-facing. Disordered stretches follow at residues 580-603 (NLPTTRSSSNNPIEASRPPFSRDE) and 632-659 (KRDPNTSIRSIHEREQDKIIHSRSHSVC). The segment covering 581–592 (LPTTRSSSNNPI) has biased composition (polar residues). Over residues 641–651 (SIHEREQDKII) the composition is skewed to basic and acidic residues.

It belongs to the SLP1 family. As to quaternary structure, interacts with EMP65.

Its subcellular location is the endoplasmic reticulum membrane. May be involved in membrane protein folding. This is an uncharacterized protein from Schizosaccharomyces pombe (strain 972 / ATCC 24843) (Fission yeast).